The chain runs to 271 residues: Ribosomal RNA small subunit methyltransferase A (271 aa).

Residues N18, L20, G45, E66, D91, and N112 each contribute to the S-adenosyl-L-methionine site.

The protein belongs to the class I-like SAM-binding methyltransferase superfamily. rRNA adenine N(6)-methyltransferase family. RsmA subfamily.

The protein localises to the cytoplasm. The catalysed reaction is adenosine(1518)/adenosine(1519) in 16S rRNA + 4 S-adenosyl-L-methionine = N(6)-dimethyladenosine(1518)/N(6)-dimethyladenosine(1519) in 16S rRNA + 4 S-adenosyl-L-homocysteine + 4 H(+). Functionally, specifically dimethylates two adjacent adenosines (A1518 and A1519) in the loop of a conserved hairpin near the 3'-end of 16S rRNA in the 30S particle. May play a critical role in biogenesis of 30S subunits. In Vibrio cholerae serotype O1 (strain ATCC 39315 / El Tor Inaba N16961), this protein is Ribosomal RNA small subunit methyltransferase A.